A 459-amino-acid polypeptide reads, in one-letter code: Eukaryotic translation initiation factor 3 subunit M (459 aa).

A PCI domain is found at 207–384; sequence LDWAQTHVVD…SEFLVHRATY (178 aa). The disordered stretch occupies residues 431-459; it reads AAAEGEKGDKNNKGPSERRRAPQEIAAAE. The segment covering 434–452 has biased composition (basic and acidic residues); sequence EGEKGDKNNKGPSERRRAP.

It belongs to the eIF-3 subunit M family. As to quaternary structure, component of the eukaryotic translation initiation factor 3 (eIF-3) complex.

The protein localises to the cytoplasm. In terms of biological role, component of the eukaryotic translation initiation factor 3 (eIF-3) complex, which is involved in protein synthesis of a specialized repertoire of mRNAs and, together with other initiation factors, stimulates binding of mRNA and methionyl-tRNAi to the 40S ribosome. The eIF-3 complex specifically targets and initiates translation of a subset of mRNAs involved in cell proliferation. The polypeptide is Eukaryotic translation initiation factor 3 subunit M (Emericella nidulans (strain FGSC A4 / ATCC 38163 / CBS 112.46 / NRRL 194 / M139) (Aspergillus nidulans)).